A 192-amino-acid chain; its full sequence is Cytidylate kinase (192 aa).

7 to 15 (GPAGSGKST) lines the ATP pocket.

The protein belongs to the cytidylate kinase family. Type 2 subfamily.

Its subcellular location is the cytoplasm. The enzyme catalyses CMP + ATP = CDP + ADP. It carries out the reaction dCMP + ATP = dCDP + ADP. The sequence is that of Cytidylate kinase from Haloarcula marismortui (strain ATCC 43049 / DSM 3752 / JCM 8966 / VKM B-1809) (Halobacterium marismortui).